The primary structure comprises 264 residues: uncharacterized protein (264 aa).

The ABC transporter domain maps to 3–243; it reads LQLDNVSLKR…QILSAFFDTP (241 aa). ATP is bound at residue 35 to 42; that stretch reads GLNGAGKT.

This sequence belongs to the ABC transporter superfamily.

This is an uncharacterized protein from Bacillus subtilis (strain 168).